The following is a 511-amino-acid chain: Bifunctional purine biosynthesis protein PurH (511 aa).

The MGS-like domain maps to Met1–Val145.

This sequence belongs to the PurH family.

The catalysed reaction is (6R)-10-formyltetrahydrofolate + 5-amino-1-(5-phospho-beta-D-ribosyl)imidazole-4-carboxamide = 5-formamido-1-(5-phospho-D-ribosyl)imidazole-4-carboxamide + (6S)-5,6,7,8-tetrahydrofolate. The enzyme catalyses IMP + H2O = 5-formamido-1-(5-phospho-D-ribosyl)imidazole-4-carboxamide. It participates in purine metabolism; IMP biosynthesis via de novo pathway; 5-formamido-1-(5-phospho-D-ribosyl)imidazole-4-carboxamide from 5-amino-1-(5-phospho-D-ribosyl)imidazole-4-carboxamide (10-formyl THF route): step 1/1. The protein operates within purine metabolism; IMP biosynthesis via de novo pathway; IMP from 5-formamido-1-(5-phospho-D-ribosyl)imidazole-4-carboxamide: step 1/1. The chain is Bifunctional purine biosynthesis protein PurH from Bacillus cereus (strain Q1).